Consider the following 356-residue polypeptide: 3-isopropylmalate dehydrogenase (356 aa).

The substrate site is built by Arg90, Arg100, Arg128, and Asp222. Mg(2+) contacts are provided by Asp222, Asp246, and Asp250. 280-292 (GSAPDIAGKGVAN) lines the NAD(+) pocket.

This sequence belongs to the isocitrate and isopropylmalate dehydrogenases family. LeuB type 1 subfamily. In terms of assembly, homodimer. The cofactor is Mg(2+). It depends on Mn(2+) as a cofactor.

The protein localises to the cytoplasm. The catalysed reaction is (2R,3S)-3-isopropylmalate + NAD(+) = 4-methyl-2-oxopentanoate + CO2 + NADH. It participates in amino-acid biosynthesis; L-leucine biosynthesis; L-leucine from 3-methyl-2-oxobutanoate: step 3/4. Its function is as follows. Catalyzes the oxidation of 3-carboxy-2-hydroxy-4-methylpentanoate (3-isopropylmalate) to 3-carboxy-4-methyl-2-oxopentanoate. The product decarboxylates to 4-methyl-2 oxopentanoate. The protein is 3-isopropylmalate dehydrogenase of Albidiferax ferrireducens (strain ATCC BAA-621 / DSM 15236 / T118) (Rhodoferax ferrireducens).